Consider the following 79-residue polypeptide: Serine protease inhibitor Kazal-type 1 (79 aa).

An N-terminal signal peptide occupies residues 1 to 23 (MKVTGIFLLSALALLSLSGNTGA). In terms of domain architecture, Kazal-like spans 26 to 79 (LGREAKCYNELNGCTKIYDPVCGTDGNTYPNECVLCFENRKRQTSILIQKSGPC). 3 disulfide bridges follow: C32-C61, C39-C58, and C47-C79.

It is found in the secreted. In terms of biological role, serine protease inhibitor which exhibits anti-trypsin activity. In the pancreas, protects against trypsin-catalyzed premature activation of zymogens. In the male reproductive tract, binds to sperm heads where it modulates sperm capacitance by inhibiting calcium uptake and nitrogen oxide (NO) production. This Homo sapiens (Human) protein is Serine protease inhibitor Kazal-type 1 (SPINK1).